A 372-amino-acid chain; its full sequence is D-alanine--D-alanine ligase (372 aa).

Positions 145–349 (KTVLRAGGIP…CPNLLDQLIE (205 aa)) constitute an ATP-grasp domain. ATP is bound at residue 176–231 (DRWGTSELFVKAVSLGSSVATLPVKTETEFTKAVKEVFRYDDRLMVEPRIRGREIE). The Mg(2+) site is built by Asp303, Glu316, and Asn318.

The protein belongs to the D-alanine--D-alanine ligase family. Mg(2+) serves as cofactor. Requires Mn(2+) as cofactor.

The protein localises to the cytoplasm. It catalyses the reaction 2 D-alanine + ATP = D-alanyl-D-alanine + ADP + phosphate + H(+). Its pathway is cell wall biogenesis; peptidoglycan biosynthesis. Its function is as follows. Cell wall formation. This is D-alanine--D-alanine ligase from Coxiella burnetii (strain CbuK_Q154) (Coxiella burnetii (strain Q154)).